The following is a 172-amino-acid chain: RNA silencing suppressor p19 (172 aa).

Basic and acidic residues predominate over residues 1-20 (MERVIQGNDAREQANGERWD). The disordered stretch occupies residues 1–37 (MERVIQGNDAREQANGERWDGGSGGTTSGFKLPDESP).

It belongs to the tombusvirus protein p19 family. As to quaternary structure, homodimer.

Viral suppressor of RNA silencing which binds specifically to silencing RNAs (siRNAs). Acts as a molecular caliper to specifically select siRNAs based on the length of the duplex region of the RNA. The protein is RNA silencing suppressor p19 of Cynara cardunculus var. scolymus (Globe artichoke).